Consider the following 120-residue polypeptide: Immunoglobulin kappa variable 2-29 (120 aa).

A signal peptide spans 1-20 (MRLPAQLLGLLMLWIPGSSA). Positions 21–43 (DIVMTQTPLSLSVTPGQPASISC) are framework-1. The 100-residue stretch at 21–120 (DIVMTQTPLS…YYCMQGIHLP (100 aa)) folds into the Ig-like domain. C43 and C113 are oxidised to a cystine. Positions 44–59 (KSSQSLLHSDGKTYLY) are complementarity-determining-1. Residues 60-74 (WYLQKPGQSPQLLIY) are framework-2. Positions 75–81 (EVSSRFS) are complementarity-determining-2. Residues 82-113 (GVPDRFSGSGSGTDFTLKISRVEAEDVGVYYC) form a framework-3 region. The complementarity-determining-3 stretch occupies residues 114–120 (MQGIHLP).

Immunoglobulins are composed of two identical heavy chains and two identical light chains; disulfide-linked.

The protein localises to the secreted. Its subcellular location is the cell membrane. Functionally, v region of the variable domain of immunoglobulin light chains that participates in the antigen recognition. Immunoglobulins, also known as antibodies, are membrane-bound or secreted glycoproteins produced by B lymphocytes. In the recognition phase of humoral immunity, the membrane-bound immunoglobulins serve as receptors which, upon binding of a specific antigen, trigger the clonal expansion and differentiation of B lymphocytes into immunoglobulins-secreting plasma cells. Secreted immunoglobulins mediate the effector phase of humoral immunity, which results in the elimination of bound antigens. The antigen binding site is formed by the variable domain of one heavy chain, together with that of its associated light chain. Thus, each immunoglobulin has two antigen binding sites with remarkable affinity for a particular antigen. The variable domains are assembled by a process called V-(D)-J rearrangement and can then be subjected to somatic hypermutations which, after exposure to antigen and selection, allow affinity maturation for a particular antigen. The chain is Immunoglobulin kappa variable 2-29 from Homo sapiens (Human).